The sequence spans 268 residues: Ribosomal RNA small subunit methyltransferase A (268 aa).

Residues Asn12, Leu14, Gly38, Glu59, Asp82, and Asn107 each coordinate S-adenosyl-L-methionine.

Belongs to the class I-like SAM-binding methyltransferase superfamily. rRNA adenine N(6)-methyltransferase family. RsmA subfamily.

Its subcellular location is the cytoplasm. The enzyme catalyses adenosine(1518)/adenosine(1519) in 16S rRNA + 4 S-adenosyl-L-methionine = N(6)-dimethyladenosine(1518)/N(6)-dimethyladenosine(1519) in 16S rRNA + 4 S-adenosyl-L-homocysteine + 4 H(+). Functionally, specifically dimethylates two adjacent adenosines (A1518 and A1519) in the loop of a conserved hairpin near the 3'-end of 16S rRNA in the 30S particle. May play a critical role in biogenesis of 30S subunits. The protein is Ribosomal RNA small subunit methyltransferase A of Aster yellows witches'-broom phytoplasma (strain AYWB).